Reading from the N-terminus, the 1423-residue chain is Protein phosphatase Slingshot homolog 2 (1423 aa).

The interval 1-37 is disordered; it reads MALVTVQRSPTPSTTSSPCASEADSGEEECRSQPRSI. The segment covering 9–18 has biased composition (low complexity); sequence SPTPSTTSSP. Residues Ser17, Ser25, and Ser36 each carry the phosphoserine modification. One can recognise a DEK-C domain in the interval 248–303; sequence ERTERLIKTKLREIMMQKDLENITSKEIRTELEMQMVCNLREFKEFIDNEMIVILG. In terms of domain architecture, Tyrosine-protein phosphatase spans 307-448; it reads SPTQIFEHVF…LEEYQGILLA (142 aa). The active-site Phosphocysteine intermediate is Cys392. Residues Ser461, Ser487, Ser534, Ser631, and Ser633 each carry the phosphoserine modification. Disordered regions lie at residues 617-641, 664-684, 696-728, 797-825, 840-862, 877-954, 962-981, 1019-1041, 1070-1108, and 1144-1179; these read TSPLKDPPMSPDPESPSPQPSCQTE, QETRSRSFSHSRMEELGGGRN, PSKVTADDQRSSSLSNTPHASEESSMDEEQSKA, ENKPGHMEQDEDSCTAQPELAKDSGMCNP, EGEPAEGEQELQGSGMHPGAKWY, LRQE…NATV, FDHLPDPQEGPGSDTGTQQE, TSPNHTGPGSEIATSEKSGEQGL, SLHPQVLPLPHSSSPEHNRPTDHPTSILSSPEDRGSSLS, and TEQSSTTDEPSAEQVSWEESQESPLSSGSEVPYKDS. Positions 621 to 635 are enriched in pro residues; sequence KDPPMSPDPESPSPQ. Positions 664 to 680 are enriched in basic and acidic residues; it reads QETRSRSFSHSRMEELG. Over residues 889-904 the composition is skewed to polar residues; it reads TCTSLSTRKNSKNDSS. Basic and acidic residues predominate over residues 910-932; the sequence is PKGKSDEAPPEHSFVLKEPEMSK. Residues 941–953 are compositionally biased toward polar residues; that stretch reads EAGSLSHSEQNAT. Residues 1019 to 1034 show a composition bias toward polar residues; the sequence is TSPNHTGPGSEIATSE. Polar residues predominate over residues 1144–1172; the sequence is TEQSSTTDEPSAEQVSWEESQESPLSSGS. Ser1217 is subject to Phosphoserine. At Thr1422 the chain carries Phosphothreonine.

The protein belongs to the protein-tyrosine phosphatase family. In terms of assembly, interacts with filamentous actin.

The protein localises to the cytoplasm. It is found in the cytoskeleton. The protein resides in the cell junction. It localises to the focal adhesion. Its subcellular location is the cytoplasmic vesicle. The protein localises to the secretory vesicle. It is found in the acrosome. It carries out the reaction O-phospho-L-tyrosyl-[protein] + H2O = L-tyrosyl-[protein] + phosphate. The catalysed reaction is O-phospho-L-seryl-[protein] + H2O = L-seryl-[protein] + phosphate. The enzyme catalyses O-phospho-L-threonyl-[protein] + H2O = L-threonyl-[protein] + phosphate. In terms of biological role, protein phosphatase which regulates actin filament dynamics. Dephosphorylates and activates the actin binding/depolymerizing factor cofilin, which subsequently binds to actin filaments and stimulates their disassembly. Inhibitory phosphorylation of cofilin is mediated by LIMK1, which may also be dephosphorylated and inactivated by this protein. Required for spermatogenesis. Involved in acrosome biogenesis, probably by regulating cofilin-mediated actin cytoskeleton remodeling during proacrosomal vesicle fusion and/or Golgi to perinuclear vesicle trafficking. This chain is Protein phosphatase Slingshot homolog 2 (SSH2), found in Homo sapiens (Human).